Reading from the N-terminus, the 170-residue chain is Anaphase-promoting complex subunit SWM1 (170 aa).

Basic and acidic residues-rich tracts occupy residues 48–67 and 132–141; these read NTRT…RNSN and GANEPRKETI. Disordered regions lie at residues 48–81 and 122–141; these read NTRT…MTSE and LNGG…KETI.

The protein belongs to the APC13 family. In terms of assembly, the APC/C is composed of at least 13 subunits that stay tightly associated throughout the cell cycle: APC1, APC2, APC4, APC5, APC9, APC11, CDC16, CDC23, CDC26, CDC27, DOC1, MND2 and SWM1. SWM1 interacts directly with CDC23 and APC5, and is required to tether APC9, CDC16, CDC26 and CDC27 to the complex.

The protein operates within protein modification; protein ubiquitination. Its function is as follows. Component of the anaphase promoting complex/cyclosome (APC/C), a cell cycle-regulated E3 ubiquitin-protein ligase complex that controls progression through mitosis and the G1 phase of the cell cycle. The APC/C is thought to confer substrate specificity and, in the presence of ubiquitin-conjugating E2 enzymes, it catalyzes the formation of protein-ubiquitin conjugates that are subsequently degraded by the 26S proteasome. In early mitosis, the APC/C is activated by CDC20 and targets securin PDS1, the B-type cyclin CLB5, and other anaphase inhibitory proteins for proteolysis, thereby triggering the separation of sister chromatids at the metaphase-to-anaphase transition. In late mitosis and in G1, degradation of CLB5 allows activation of the APC/C by CDH1, which is needed to destroy CDC20 and the B-type cyclin CLB2 to allow exit from mitosis and creating the low CDK state necessary for cytokinesis and for reforming prereplicative complexes in G1 prior to another round of replication. SWM1 is required for APC/C activity in meiosis. The polypeptide is Anaphase-promoting complex subunit SWM1 (SWM1) (Saccharomyces cerevisiae (strain ATCC 204508 / S288c) (Baker's yeast)).